Consider the following 180-residue polypeptide: Negative modulator of initiation of replication (180 aa).

The segment at 115–119 (RTRVY) is interaction with DNA.

Belongs to the SeqA family. Homodimer. Polymerizes to form helical filaments.

The protein resides in the cytoplasm. Negative regulator of replication initiation, which contributes to regulation of DNA replication and ensures that replication initiation occurs exactly once per chromosome per cell cycle. Binds to pairs of hemimethylated GATC sequences in the oriC region, thus preventing assembly of replication proteins and re-initiation at newly replicated origins. Repression is relieved when the region becomes fully methylated. The polypeptide is Negative modulator of initiation of replication (Aliivibrio fischeri (strain ATCC 700601 / ES114) (Vibrio fischeri)).